The primary structure comprises 570 residues: Peptidyl-prolyl cis-trans isomerase FKBP9 (570 aa).

An N-terminal signal peptide occupies residues M1–A24. 4 PPIase FKBP-type domains span residues G54–W142, S166–H254, G278–H365, and G389–V477. N-linked (GlcNAc...) asparagine glycans are attached at residues N174, N286, N302, and N397. EF-hand domains are found at residues W488–S523 and D533–D568. Residues D501, D503, N505, E507, E512, D546, N548, D550, K552, and E557 each contribute to the Ca(2+) site. The Prevents secretion from ER motif lies at H567–L570.

Post-translationally, phosphorylated.

It is found in the endoplasmic reticulum. The catalysed reaction is [protein]-peptidylproline (omega=180) = [protein]-peptidylproline (omega=0). With respect to regulation, inhibited by FK506. Functionally, PPIases accelerate the folding of proteins during protein synthesis. The protein is Peptidyl-prolyl cis-trans isomerase FKBP9 (FKBP9) of Homo sapiens (Human).